The chain runs to 461 residues: Porin AaxA (461 aa).

The N-terminal stretch at 1-22 (MSFRSILLTALLSLSFTNTMQA) is a signal peptide.

Belongs to the OprB family.

The protein resides in the cell outer membrane. In terms of biological role, facilitates L-arginine uptake, as part of the AaxABC system. The arginine uptake by the bacterium in the macrophage may be a virulence factor against the host innate immune response. In Chlamydia muridarum (strain MoPn / Nigg), this protein is Porin AaxA (aaxA).